Consider the following 209-residue polypeptide: Large ribosomal subunit protein uL4 (209 aa).

Residues 47–72 (TSSTKTRSEVRGSSKKPWKQKGTGRA) form a disordered region. Residues 59 to 72 (SSKKPWKQKGTGRA) show a composition bias toward basic residues.

The protein belongs to the universal ribosomal protein uL4 family. In terms of assembly, part of the 50S ribosomal subunit.

In terms of biological role, one of the primary rRNA binding proteins, this protein initially binds near the 5'-end of the 23S rRNA. It is important during the early stages of 50S assembly. It makes multiple contacts with different domains of the 23S rRNA in the assembled 50S subunit and ribosome. Functionally, forms part of the polypeptide exit tunnel. In Borreliella burgdorferi (strain ZS7) (Borrelia burgdorferi), this protein is Large ribosomal subunit protein uL4.